The sequence spans 57 residues: NADH dehydrogenase [ubiquinone] 1 beta subcomplex subunit 1 (57 aa).

Residues 10–26 traverse the membrane as a helical segment; sequence HWVHILVPAGFVFGCYL.

The protein belongs to the complex I NDUFB1 subunit family. As to quaternary structure, complex I is composed of 45 different subunits.

The protein resides in the mitochondrion inner membrane. In terms of biological role, accessory subunit of the mitochondrial membrane respiratory chain NADH dehydrogenase (Complex I) that is believed not to be involved in catalysis. Complex I functions in the transfer of electrons from NADH to the respiratory chain. The immediate electron acceptor for the enzyme is believed to be ubiquinone. The polypeptide is NADH dehydrogenase [ubiquinone] 1 beta subcomplex subunit 1 (Ndufb1) (Mus musculus (Mouse)).